We begin with the raw amino-acid sequence, 232 residues long: Large ribosomal subunit protein uL1 (232 aa).

This sequence belongs to the universal ribosomal protein uL1 family. As to quaternary structure, part of the 50S ribosomal subunit.

Functionally, binds directly to 23S rRNA. The L1 stalk is quite mobile in the ribosome, and is involved in E site tRNA release. Protein L1 is also a translational repressor protein, it controls the translation of the L11 operon by binding to its mRNA. This Methylobacterium radiotolerans (strain ATCC 27329 / DSM 1819 / JCM 2831 / NBRC 15690 / NCIMB 10815 / 0-1) protein is Large ribosomal subunit protein uL1.